The following is a 334-amino-acid chain: Putative heat shock protein HSP 90-alpha A5 (334 aa).

The tract at residues 55–107 (KRNKQVSDAEAEKKEDKRKKKKESNDKPEIEDVGSDEEEEKKDADKKKKKSKE) is disordered. Positions 59 to 69 (QVSDAEAEKKE) are enriched in basic and acidic residues. Residues 85–94 (EDVGSDEEEE) show a composition bias toward acidic residues. Residue Ser-89 is modified to Phosphoserine. The stretch at 234–267 (LELPEDEEEKKKQEEKKTKFENLCKIMKDMLEKK) forms a coiled coil. Residues 314-334 (EMPPLRGGDDTSRMEEVGGSG) form a disordered region. Positions 320–334 (GGDDTSRMEEVGGSG) are enriched in basic and acidic residues. A TPR repeat-binding motif is present at residues 327-331 (MEEVG).

It belongs to the heat shock protein 90 family. As to quaternary structure, homodimer.

Its subcellular location is the cytoplasm. Putative molecular chaperone that may promote the maturation, structural maintenance and proper regulation of specific target proteins. In Homo sapiens (Human), this protein is Putative heat shock protein HSP 90-alpha A5 (HSP90AA5P).